Reading from the N-terminus, the 243-residue chain is MEHSSNRPEDFPLNVFSVTPYTPSTADIQVSDDDKAGATLLFSGIFLGLVGITFTVMGWIKYQGVSHFEWTQLLGPILLSVGVTFILIAVCKFKMLSCQLCSDNEERVPDSDQTSGGQSFVFTGINQPITFHGATVVQYIPPPYGSQEPLGMNATYLQPMMNPCGLIPPSGAAAAAPSPPQYYTIYPQDNAAFVESEGFSPFVGTGYDRPDSDADQLEGTELEEEDCVCFSPPPYEEIYALPR.

2 consecutive transmembrane segments (helical) span residues 40–60 and 73–93; these read LLFSGIFLGLVGITFTVMGWI and LLGPILLSVGVTFILIAVCKF.

In terms of assembly, interacts with SLC34A1; regulates SLC34A1 internalization by PTH and FGF23. As to expression, kidney specific. Expressed in renal primary proximal tubule cells.

It is found in the endoplasmic reticulum membrane. Its subcellular location is the apical cell membrane. Regulator of plasma phosphate homeostasis. Decreases serum inorganic phosphate (Pi) uptake by regulating the sodium-phosphate cotransporter SLC34A1 trafficking by PTH and FGF23 in the kidney. The sequence is that of Transmembrane protein 174 (Tmem174) from Mus musculus (Mouse).